We begin with the raw amino-acid sequence, 342 residues long: Palmitoyltransferase PFA4 (342 aa).

At 1–8 (MITFSNPW) the chain is on the cytoplasmic side. The chain crosses the membrane as a helical span at residues 9–29 (IGVIIPCIIIFTLSTFSAIYI). Residues 30–38 (LPHHVSNNE) are Lumenal-facing. The helical transmembrane segment at 39–59 (LTLFICASAMVWISYIIAIIV) threads the bilayer. The Cytoplasmic portion of the chain corresponds to 60–124 (PPGSPPKNYT…GHRNMPHFMR (65 aa)). Positions 77–127 (MYCLKCKAYKPERTHHSKALGVCVLKMDHHCPWTNNTVGHRNMPHFMRFLV) constitute a DHHC domain. Catalysis depends on cysteine 107, which acts as the S-palmitoyl cysteine intermediate. A helical membrane pass occupies residues 125-145 (FLVWVDMTVGYLFIRLCIRIM). Residues 146-162 (KLWRDKHLPSYLFDKTE) lie on the Lumenal side of the membrane. Residues 163 to 183 (VILSIVFLPASFFVLFTVGIL) form a helical membrane-spanning segment. The Cytoplasmic segment spans residues 184–342 (TIRVFVNMCN…ADFGVEHTDI (159 aa)).

The protein belongs to the DHHC palmitoyltransferase family. PFA4 subfamily.

It is found in the endoplasmic reticulum membrane. The enzyme catalyses L-cysteinyl-[protein] + hexadecanoyl-CoA = S-hexadecanoyl-L-cysteinyl-[protein] + CoA. Its function is as follows. Mediates the reversible addition of palmitate to target proteins, thereby regulating their membrane association and biological function. The sequence is that of Palmitoyltransferase PFA4 from Yarrowia lipolytica (strain CLIB 122 / E 150) (Yeast).